We begin with the raw amino-acid sequence, 776 residues long: Photosystem I P700 chlorophyll a apoprotein A1 (776 aa).

Helical transmembrane passes span I76–A99, L162–H185, L201–N225, V309–Y327, W368–Y391, L407–I433, A455–H477, and L557–L575. Residues C599 and C608 each coordinate [4Fe-4S] cluster. The next 2 membrane-spanning stretches (helical) occupy residues H615–W636 and L690–F712. H701 contacts divinylchlorophyll a'. Divinyl chlorophyll a contacts are provided by M709 and Y717. W718 contacts phylloquinone. The chain crosses the membrane as a helical span at residues A750–A770.

It belongs to the PsaA/PsaB family. The PsaA/B heterodimer binds the P700 chlorophyll special pair and subsequent electron acceptors. PSI consists of a core antenna complex that captures photons, and an electron transfer chain that converts photonic excitation into a charge separation. The cyanobacterial PSI reaction center is composed of one copy each of PsaA,B,C,D,E,F,I,J,K,L,M and X, and forms trimeric complexes. It depends on PSI electron transfer chain: 5 divinyl chlorophyll a, 1 divinyl chlorophyll a', 2 phylloquinones and 3 4Fe-4S clusters. PSI core antenna: 90 divinyl chlorophyll a, 22 carotenoids, 3 phospholipids and 1 galactolipid. P700 is a divinyl chlorophyll a/divinyl chlorophyll a' dimer, A0 is one or more chlorophyll divinyl a, A1 is one or both phylloquinones and FX is a shared 4Fe-4S iron-sulfur center. as a cofactor.

It is found in the cellular thylakoid membrane. It carries out the reaction reduced [plastocyanin] + hnu + oxidized [2Fe-2S]-[ferredoxin] = oxidized [plastocyanin] + reduced [2Fe-2S]-[ferredoxin]. In terms of biological role, psaA and PsaB bind P700, the primary electron donor of photosystem I (PSI), as well as the electron acceptors A0, A1 and FX. PSI is a plastocyanin/cytochrome c6-ferredoxin oxidoreductase, converting photonic excitation into a charge separation, which transfers an electron from the donor P700 chlorophyll pair to the spectroscopically characterized acceptors A0, A1, FX, FA and FB in turn. Oxidized P700 is reduced on the lumenal side of the thylakoid membrane by plastocyanin or cytochrome c6. The sequence is that of Photosystem I P700 chlorophyll a apoprotein A1 from Prochlorococcus marinus (strain MIT 9313).